We begin with the raw amino-acid sequence, 228 residues long: MKNTFLNTVKGSLIISCQALPNEPLHSSFIMSRMALAAKGAGAAGIRANSVVDIQAIQDEVDLPLIGLSKVDYPDSPVYITPTIKEMRAVAATGCAVVACDVTGQPRPNGEKLAEIVATMRTEFPDTLLMADTDTIENVKVADKLGFDIIGTTMHGYTPATTGANIADNDFAYLKEVLQATSRPVIAEGKVDTPEKMKRCLDLGCHAVVVGGAITRPLEIAQRFISAL.

The protein belongs to the NanE family.

The catalysed reaction is an N-acyl-D-glucosamine 6-phosphate = an N-acyl-D-mannosamine 6-phosphate. It participates in amino-sugar metabolism; N-acetylneuraminate degradation; D-fructose 6-phosphate from N-acetylneuraminate: step 3/5. Functionally, converts N-acetylmannosamine-6-phosphate (ManNAc-6-P) to N-acetylglucosamine-6-phosphate (GlcNAc-6-P). This is Putative N-acetylmannosamine-6-phosphate 2-epimerase from Lactiplantibacillus plantarum (strain ATCC BAA-793 / NCIMB 8826 / WCFS1) (Lactobacillus plantarum).